Consider the following 205-residue polypeptide: Holliday junction branch migration complex subunit RuvA (205 aa).

A domain I region spans residues 1–62 (MFEYVTGYVE…EDIMALYGFK (62 aa)). A domain II region spans residues 63-141 (TREERLLFTK…DVVPDAFVDL (79 aa)). The interval 142-152 (FSDTERFDEKK) is flexible linker. The interval 153–205 (GTSAELDEALEALRALGYAEREVSRVVPELLKESLTTDQYIKKALSLLLNGKR) is domain III.

The protein belongs to the RuvA family. In terms of assembly, homotetramer. Forms an RuvA(8)-RuvB(12)-Holliday junction (HJ) complex. HJ DNA is sandwiched between 2 RuvA tetramers; dsDNA enters through RuvA and exits via RuvB. An RuvB hexamer assembles on each DNA strand where it exits the tetramer. Each RuvB hexamer is contacted by two RuvA subunits (via domain III) on 2 adjacent RuvB subunits; this complex drives branch migration. In the full resolvosome a probable DNA-RuvA(4)-RuvB(12)-RuvC(2) complex forms which resolves the HJ.

The protein resides in the cytoplasm. The RuvA-RuvB-RuvC complex processes Holliday junction (HJ) DNA during genetic recombination and DNA repair, while the RuvA-RuvB complex plays an important role in the rescue of blocked DNA replication forks via replication fork reversal (RFR). RuvA specifically binds to HJ cruciform DNA, conferring on it an open structure. The RuvB hexamer acts as an ATP-dependent pump, pulling dsDNA into and through the RuvAB complex. HJ branch migration allows RuvC to scan DNA until it finds its consensus sequence, where it cleaves and resolves the cruciform DNA. This is Holliday junction branch migration complex subunit RuvA from Bacillus cereus (strain G9842).